A 385-amino-acid polypeptide reads, in one-letter code: Cell division protein FtsZ (385 aa).

GTP is bound by residues 37 to 41 (GGGSN), 125 to 127 (GTG), E156, K160, and D204.

This sequence belongs to the FtsZ family. As to quaternary structure, homodimer. Polymerizes to form a dynamic ring structure in a strictly GTP-dependent manner. Interacts directly with several other division proteins.

The protein localises to the cytoplasm. Essential cell division protein that forms a contractile ring structure (Z ring) at the future cell division site. The regulation of the ring assembly controls the timing and the location of cell division. One of the functions of the FtsZ ring is to recruit other cell division proteins to the septum to produce a new cell wall between the dividing cells. Binds GTP and shows GTPase activity. The protein is Cell division protein FtsZ of Helicobacter pylori (strain J99 / ATCC 700824) (Campylobacter pylori J99).